Here is a 463-residue protein sequence, read N- to C-terminus: Argininosuccinate lyase (463 aa).

This sequence belongs to the lyase 1 family. Argininosuccinate lyase subfamily.

It localises to the cytoplasm. The enzyme catalyses 2-(N(omega)-L-arginino)succinate = fumarate + L-arginine. It participates in amino-acid biosynthesis; L-arginine biosynthesis; L-arginine from L-ornithine and carbamoyl phosphate: step 3/3. This chain is Argininosuccinate lyase, found in Streptococcus pneumoniae (strain JJA).